A 49-amino-acid polypeptide reads, in one-letter code: Large ribosomal subunit protein bL33A (49 aa).

This sequence belongs to the bacterial ribosomal protein bL33 family.

This Mycoplasmopsis agalactiae (strain NCTC 10123 / CIP 59.7 / PG2) (Mycoplasma agalactiae) protein is Large ribosomal subunit protein bL33A.